A 204-amino-acid chain; its full sequence is Thymidylate kinase (204 aa).

ATP is bound at residue 13–20; the sequence is GIDGSGKS.

Belongs to the thymidylate kinase family.

The catalysed reaction is dTMP + ATP = dTDP + ADP. Its function is as follows. Phosphorylation of dTMP to form dTDP in both de novo and salvage pathways of dTTP synthesis. The chain is Thymidylate kinase from Leptospira interrogans serogroup Icterohaemorrhagiae serovar copenhageni (strain Fiocruz L1-130).